The following is a 254-amino-acid chain: MAEEVWVGTWRPHRPRGPIMALYSSPGPKYLIPPTTGFVKQTPTKLRAPAYSFRGAPMLLAENCSPGPRYSVNPKILRTGKDLGPAYSILGRYHTKTTLTPGPGDYFPEKSTKHVFDSAPSHSISARTKTFRVDSTPGPAAYMLPMVMGPHTIGKVSQPSFSIKGRSKLGSFSDDLHKTPGPAAYRQTDVQVTKFKAPQYTMAARVEPPGDKTLKPGPGAHSPEKVTMTRPCAPVVSFGIKHSDYMTPLVVDVD.

2 STPGR repeats span residues 180–205 (PGPAAYRQTDVQVTKFKAPQYTMAAR) and 216–241 (PGPGAHSPEKVTMTRPCAPVVSFGIK). Positions 207-226 (EPPGDKTLKPGPGAHSPEKV) are disordered.

It belongs to the CIMAP family. In terms of assembly, microtubule inner protein component of sperm flagellar doublet microtubules.

The protein localises to the cytoplasm. It is found in the cytoskeleton. The protein resides in the flagellum axoneme. Outer dense fibers are filamentous structures located on the outside of the axoneme in the midpiece and principal piece of the mammalian sperm tail. May help to maintain the passive elastic structures and elastic recoil of the sperm tail. In Bos taurus (Bovine), this protein is Ciliary microtubule associated protein 1A (CIMAP1A).